The primary structure comprises 1473 residues: Ovostatin (1473 aa).

An N-terminal signal peptide occupies residues M1–G36. 13 N-linked (GlcNAc...) asparagine glycosylation sites follow: N67, N82, N89, N191, N342, N403, N527, N588, N757, N1141, N1221, N1315, and N1347.

This sequence belongs to the protease inhibitor I39 (alpha-2-macroglobulin) family. Homotetramer, which consists of two pairs of disulfide-linked chains. Post-translationally, lacks the thioester bond found in other members of this family. Glycosylated; contains 56 glucosamine units per subunit.

It localises to the secreted. Its function is as follows. Is able to inhibit all four classes of proteinases by a unique 'trapping' mechanism. This protein has a peptide stretch, called the 'bait region' which contains specific cleavage sites for different proteinases. When a proteinase cleaves the bait region, a conformational change is induced in the protein which traps the proteinase. The entrapped enzyme remains active against low molecular weight substrates (activity against high molecular weight substrates is greatly reduced). The polypeptide is Ovostatin (Gallus gallus (Chicken)).